The chain runs to 837 residues: V-type proton ATPase 116 kDa subunit a 1 (837 aa).

At 1-388 (MGELFRSEEM…DAYGIGTYRE (388 aa)) the chain is on the cytoplasmic side. Residues threonine 250 and threonine 360 each carry the phosphothreonine modification. A Phosphotyrosine modification is found at tyrosine 364. The chain crosses the membrane as a helical span at residues 389 to 407 (INPAPYTIITFPFLFAVMF). At 408–409 (GD) the chain is on the vacuolar side. The helical transmembrane segment at 410–426 (FGHGILMTLFAVWMVLR) threads the bilayer. Residues 427–441 (ESRILSQKNENEMFS) lie on the Cytoplasmic side of the membrane. Residues 442–471 (TVFSGRYIILLMGVFSMYTGLIYNDCFSKS) traverse the membrane as a helical segment. Residues 472–534 (LNIFGSSWSV…ATNKLTFLNS (63 aa)) lie on the Vacuolar side of the membrane. A helical transmembrane segment spans residues 535–554 (FKMKMSVILGIIHMLFGVSL). The Cytoplasmic segment spans residues 555-572 (SLFNHIYFKKPLNIYFGF). Residues 573-593 (IPEIIFMTSLFGYLVILIFYK) form a helical membrane-spanning segment. The Vacuolar portion of the chain corresponds to 594-638 (WTAYDAHTSENAPSLLIHFINMFLFSYPESGYSMLYSGQKGIQCF). A helical membrane pass occupies residues 639 to 658 (LVVVALLCVPWMLLFKPLVL). The Cytoplasmic portion of the chain corresponds to 659–724 (RRQYLRRKHL…ATMVHQAIHT (66 aa)). A helical transmembrane segment spans residues 725–749 (IEYCLGCISNTASYLRLWALSLAHA). Topologically, residues 750-770 (QLSEVLWTMVIHIGLSVKSLA) are vacuolar. A helical transmembrane segment spans residues 771–809 (GGLVLFFFFTAFATLTVAILLIMEGLSAFLHALRLHWVE). Topologically, residues 810–837 (FQNKFYSGTGFKFLPFSFEHIREGKFGE) are cytoplasmic.

This sequence belongs to the V-ATPase 116 kDa subunit family. As to quaternary structure, V-ATPase is a heteromultimeric enzyme made up of two complexes: the ATP-hydrolytic V1 complex and the proton translocation V0 complex. The V1 complex consists of three catalytic AB heterodimers that form a heterohexamer, three peripheral stalks each consisting of EG heterodimers, one central rotor including subunits D and F, and the regulatory subunits C and H. The proton translocation complex V0 consists of the proton transport subunit a, a ring of proteolipid subunits c9c'', rotary subunit d, subunits e and f, and the accessory subunits ATP6AP1/Ac45 and ATP6AP2/PRR. Interacts with SPAAR.

Its subcellular location is the cytoplasmic vesicle. The protein resides in the clathrin-coated vesicle membrane. It localises to the secretory vesicle. The protein localises to the synaptic vesicle membrane. It is found in the melanosome. Subunit of the V0 complex of vacuolar(H+)-ATPase (V-ATPase), a multisubunit enzyme composed of a peripheral complex (V1) that hydrolyzes ATP and a membrane integral complex (V0) that translocates protons. V-ATPase is responsible for the acidification of various organelles, such as lysosomes, endosomes, the trans-Golgi network, and secretory granules, including synaptic vesicles. In certain cell types, can be exported to the plasma membrane, where it is involved in the acidification of the extracellular environment. Required for assembly and activity of the vacuolar ATPase. Through its action on compartment acidification, plays an essential role in neuronal development in terms of integrity and connectivity of neurons. In Pongo abelii (Sumatran orangutan), this protein is V-type proton ATPase 116 kDa subunit a 1 (ATP6V0A1).